Here is a 457-residue protein sequence, read N- to C-terminus: PDZ and LIM domain protein 7 (457 aa).

A PDZ domain is found at 1–85 (MDSFKVVLEG…RLSLGLSRAQ (85 aa)). The residue at position 78 (S78) is a Phosphoserine. 2 disordered regions span residues 82–166 (SRAQ…QSRS) and 186–226 (FMKK…PWAV). At T96 the chain carries Phosphothreonine. An Asymmetric dimethylarginine modification is found at R103. S111 carries the post-translational modification Phosphoserine. Polar residues predominate over residues 126–135 (DSTLRQNGQL). Residues 144–157 (SKQRLMEDTEDWRP) are compositionally biased toward basic and acidic residues. Position 247 is a phosphoserine (S247). LIM zinc-binding domains lie at 280-338 (PVCH…VRYA), 339-398 (PNCA…MFGT), and 399-457 (KCRG…FSHV).

As to quaternary structure, specifically binds via its LIM zinc-binding 3 domain (LIM 3) domain to endocytic codes of INSR, but not with those of IGF1R, LDLR, TFRC, or EGFR. Interacts with various PKC isoforms through the LIM zinc-binding domains. Binds to RET in a phosphorylation-independent manner via its LIM zinc-binding domain 2 (LIM 2). Probably part of a complex with SHC and the RET dimer. Interacts with TPM2, TBX4 and TBX5.

Its subcellular location is the cytoplasm. The protein localises to the cytoskeleton. In terms of biological role, may function as a scaffold on which the coordinated assembly of proteins can occur. May play a role as an adapter that, via its PDZ domain, localizes LIM-binding proteins to actin filaments of both skeletal muscle and nonmuscle tissues. Involved in both of the two fundamental mechanisms of bone formation, direct bone formation (e.g. embryonic flat bones mandible and cranium), and endochondral bone formation (e.g. embryonic long bone development). Plays a role during fracture repair. Involved in BMP6 signaling pathway. The polypeptide is PDZ and LIM domain protein 7 (Pdlim7) (Mus musculus (Mouse)).